The primary structure comprises 207 residues: NADH-quinone oxidoreductase subunit A (207 aa).

3 helical membrane-spanning segments follow: residues 6 to 26 (LSAIAFILAAIGLVVFMLVVP), 62 to 82 (LVAIFFVIFDLEALYLYAYAV), and 87 to 107 (AGWLGFAAAAIFITILIIGLV).

This sequence belongs to the complex I subunit 3 family. NDH-1 is composed of 14 different subunits. Subunits NuoA, H, J, K, L, M, N constitute the membrane sector of the complex.

It is found in the cell inner membrane. The enzyme catalyses a quinone + NADH + 5 H(+)(in) = a quinol + NAD(+) + 4 H(+)(out). In terms of biological role, NDH-1 shuttles electrons from NADH, via FMN and iron-sulfur (Fe-S) centers, to quinones in the respiratory chain. The immediate electron acceptor for the enzyme in this species is believed to be ubiquinone. Couples the redox reaction to proton translocation (for every two electrons transferred, four hydrogen ions are translocated across the cytoplasmic membrane), and thus conserves the redox energy in a proton gradient. The protein is NADH-quinone oxidoreductase subunit A of Psychrobacter cryohalolentis (strain ATCC BAA-1226 / DSM 17306 / VKM B-2378 / K5).